Consider the following 375-residue polypeptide: uncharacterized protein (375 aa).

Positions 54 to 78 (EGIPPPTQSQEPLKPQENISRPIHH) are disordered.

This is an uncharacterized protein from Bos taurus (Bovine).